A 480-amino-acid chain; its full sequence is 2-phosphoxylose phosphatase 1 (480 aa).

The Cytoplasmic segment spans residues 1–6 (MLHRNR). A helical; Signal-anchor for type II membrane protein membrane pass occupies residues 7-27 (FLVLLALAGLLAFLSLSLQFF). The Lumenal segment spans residues 28 to 480 (HLIPVSATKN…YYDACHGEGA (453 aa)). His97 functions as the Nucleophile in the catalytic mechanism. N-linked (GlcNAc...) asparagine glycosylation is found at Asn194, Asn305, and Asn354. Asp379 (proton donor) is an active-site residue.

The protein belongs to the histidine acid phosphatase family. As to quaternary structure, interacts with B3GAT3; the interaction increases the 2-phosphoxylose phosphatase activity of PXYLP1 during completion of linkage region formation in a B3GAT3-mediated manner.

It is found in the golgi apparatus membrane. It catalyses the reaction 3-O-[beta-D-GlcA-(1-&gt;3)-beta-D-Gal-(1-&gt;3)-beta-D-Gal-(1-&gt;4)-beta-D-2-O-P-Xyl]-L-seryl-[protein] + H2O = 3-O-(beta-D-GlcA-(1-&gt;3)-beta-D-Gal-(1-&gt;3)-beta-D-Gal-(1-&gt;4)-beta-D-Xyl)-L-seryl-[protein] + phosphate. In terms of biological role, responsible for the 2-O-dephosphorylation of xylose in the glycosaminoglycan-protein linkage region of proteoglycans thereby regulating the amount of mature glycosaminoglycan (GAG) chains. Sulfated glycosaminoglycans (GAGs), including heparan sulfate and chondroitin sulfate, are synthesized on the so-called common GAG-protein linkage region (GlcUAbeta1-3Galbeta1-3Galbeta1-4Xylbeta1-O-Ser) of core proteins, which is formed by the stepwise addition of monosaccharide residues by the respective specific glycosyltransferases. Xylose 2-O-dephosphorylation during completion of linkage region formation is a prerequisite for the initiation and efficient elongation of the repeating disaccharide region of GAG chains. The sequence is that of 2-phosphoxylose phosphatase 1 from Mus musculus (Mouse).